The following is a 225-amino-acid chain: MSIKAIVVDTAGTTTDLNFIQDVLFPYSHQVMASFLAQNQQQVLVESCINDVRDIALEPSATVARVAEILQIWITEDRKLAPLKTLQGLIWKQGYSSLAFQGQIYPDFIEAISRYRQQGVAIYSFSSGSVEAQKLLFSHSEVGDLTPMFSGHFDMRMGNKLDKQAYLNIHNTLGLPPKQILFVSDTQEELTAAQAAGMMTCLMSRGDAFAPTEHKQVGSFTALNI.

Belongs to the HAD-like hydrolase superfamily. MasA/MtnC family. Monomer. Mg(2+) serves as cofactor.

It carries out the reaction 5-methylsulfanyl-2,3-dioxopentyl phosphate + H2O = 1,2-dihydroxy-5-(methylsulfanyl)pent-1-en-3-one + phosphate. The protein operates within amino-acid biosynthesis; L-methionine biosynthesis via salvage pathway; L-methionine from S-methyl-5-thio-alpha-D-ribose 1-phosphate: step 3/6. It functions in the pathway amino-acid biosynthesis; L-methionine biosynthesis via salvage pathway; L-methionine from S-methyl-5-thio-alpha-D-ribose 1-phosphate: step 4/6. Bifunctional enzyme that catalyzes the enolization of 2,3-diketo-5-methylthiopentyl-1-phosphate (DK-MTP-1-P) into the intermediate 2-hydroxy-3-keto-5-methylthiopentenyl-1-phosphate (HK-MTPenyl-1-P), which is then dephosphorylated to form the acireductone 1,2-dihydroxy-3-keto-5-methylthiopentene (DHK-MTPene). The chain is Enolase-phosphatase E1 from Shewanella denitrificans (strain OS217 / ATCC BAA-1090 / DSM 15013).